Here is a 564-residue protein sequence, read N- to C-terminus: Serine/threonine-protein kinase DBF20 (564 aa).

Phosphoserine is present on Ser17. The segment at 24-62 is disordered; it reads LNIPKPTSPQAQYRPARKSENGRLTPGLPRSYKPCDSDD. The Protein kinase domain maps to 169-469; it reads FQILTQVGQG…FEQVRKMSYF (301 aa). ATP contacts are provided by residues 175 to 183 and Lys198; that span reads VGQGGYGQV. The active-site Proton acceptor is Asp292. Ser366 is subject to Phosphoserine. An AGC-kinase C-terminal domain is found at 470 to 547; that stretch reads AEINFETLRT…RHRDGKQGSS (78 aa). Thr536 is modified (phosphothreonine).

Belongs to the protein kinase superfamily. Ser/Thr protein kinase family.

The catalysed reaction is L-seryl-[protein] + ATP = O-phospho-L-seryl-[protein] + ADP + H(+). The enzyme catalyses L-threonyl-[protein] + ATP = O-phospho-L-threonyl-[protein] + ADP + H(+). Functionally, is probably a Ser/Thr-protein kinase that may function in initiation of DNA synthesis and also in late nuclear division. This chain is Serine/threonine-protein kinase DBF20 (DBF20), found in Saccharomyces cerevisiae (strain ATCC 204508 / S288c) (Baker's yeast).